An 80-amino-acid polypeptide reads, in one-letter code: Exodeoxyribonuclease 7 small subunit (80 aa).

This sequence belongs to the XseB family. Heterooligomer composed of large and small subunits.

It is found in the cytoplasm. It catalyses the reaction Exonucleolytic cleavage in either 5'- to 3'- or 3'- to 5'-direction to yield nucleoside 5'-phosphates.. In terms of biological role, bidirectionally degrades single-stranded DNA into large acid-insoluble oligonucleotides, which are then degraded further into small acid-soluble oligonucleotides. The sequence is that of Exodeoxyribonuclease 7 small subunit from Pseudomonas fluorescens (strain Pf0-1).